A 380-amino-acid polypeptide reads, in one-letter code: MEPRAGVSKQDIREQIWDYMESQNLADFPRPVHHRIPNFKGASRAAEHFPRLQAFKMARTIKVNPDAPQKNARFFVLESKKTLLVPTPRLRTGLFNKITPPPGATKDILRKCATSQGVRNYSTPVGLDSKVLVDLVVVGSVAVSEKGWRIGKGEGYADLEYAMMVSMGAVSQGTPVVTIVHDCQVVDIPEALLEDHDLTVDYILTPTRVITTGCERPKPAGIAWSKISCEMLGKMPILRSLRHQEEQAGKDVTLRDGPRSPPGATRSPRDLAPPELGSVPLSSVQIGNLPRDARVSELKRALSALGVAPSRLTWQGPQHGAFLHYRDPAEAQQAIACLQGFRLGANTVRVVLARQQRASDLVGSHTAEPLPDHQPAIAGP.

Positions 245–258 (EEQAGKDVTLRDGP) are enriched in basic and acidic residues. Disordered regions lie at residues 245–283 (EEQA…PLSS) and 361–380 (LVGS…IAGP). An RRM domain is found at 282-355 (SSVQIGNLPR…NTVRVVLARQ (74 aa)).

In Bos taurus (Bovine), this protein is Methenyltetrahydrofolate synthase domain-containing protein (MTHFSD).